The following is a 356-amino-acid chain: Mannonate dehydratase (356 aa).

The protein belongs to the mannonate dehydratase family. Fe(2+) serves as cofactor. Requires Mn(2+) as cofactor.

It carries out the reaction D-mannonate = 2-dehydro-3-deoxy-D-gluconate + H2O. Its pathway is carbohydrate metabolism; pentose and glucuronate interconversion. In terms of biological role, catalyzes the dehydration of D-mannonate. The chain is Mannonate dehydratase from Levilactobacillus brevis (strain ATCC 367 / BCRC 12310 / CIP 105137 / JCM 1170 / LMG 11437 / NCIMB 947 / NCTC 947) (Lactobacillus brevis).